Reading from the N-terminus, the 533-residue chain is Capsid protein VP1 (533 aa).

The interval 333 to 353 (TIDLQQNPVPQTSSSTTDSPQ) is disordered.

The protein belongs to the microviridae F protein family.

Its subcellular location is the virion. It localises to the host cytoplasm. Its function is as follows. Assembles to form an icosahedral capsid with a T=1 symmetry. The chain is Capsid protein VP1 from Bdellovibrio bacteriovorus (Bacteriophage phiMH2K).